The primary structure comprises 492 residues: Protein GvpD2 (492 aa).

G39–T46 contacts ATP. Residues R355–G368 are compositionally biased toward basic and acidic residues. Positions R355–L379 are disordered.

It belongs to the gas vesicle GvpD family. As to quaternary structure, homodimer. Interacts with GvpE, also with GvpE from H.mediterranei.

It localises to the cytoplasm. Its function is as follows. Causes a decrease in the amount of GvpE protein. Gas vesicles are hollow, gas filled proteinaceous nanostructures found in several microbial planktonic microorganisms. They allow positioning of halobacteria at the optimal depth for growth in the poorly aerated, shallow brine pools of their habitat. Functionally, expression of 2 c-vac DNA fragments containing 2 divergently transcribed regions (gvpE-gvpF-gvpG-gvpH-gvpI-gvpJ-gvpK-gvpL-gvpM and gvpA-gvpC-gvpN-gvpO) allows H.volcanii to produce gas vesicles. The chain is Protein GvpD2 from Halobacterium salinarum (strain ATCC 700922 / JCM 11081 / NRC-1) (Halobacterium halobium).